The following is a 234-amino-acid chain: Ponticulin-like protein J (234 aa).

The signal sequence occupies residues 1 to 20 (MRLLNNLILMVVLFVAVSNA). 4 N-linked (GlcNAc...) asparagine glycosylation sites follow: Asn19, Asn143, Asn166, and Asn206. A disordered region spans residues 115–213 (TIKCGTLPPD…SDNETAEGNN (99 aa)). The segment covering 154–195 (KSTPKSPSTPKTNNSNEDSDLTTSSSDSSSSTKSSPKSKSST) has biased composition (low complexity). Residue Asn212 is the site of GPI-like-anchor amidated asparagine attachment. Asn213 carries an N-linked (GlcNAc...) asparagine glycan. Residues 213 to 234 (NASSNIATFSLVIISLLVASLF) constitute a propeptide, removed in mature form.

This sequence belongs to the ponticulin family. Post-translationally, the GPI-like-anchor contains a phosphoceramide group, rather than a phosphatidyl group.

The protein localises to the cell membrane. Binds F-actin and nucleates actin assembly. The polypeptide is Ponticulin-like protein J (ponJ) (Dictyostelium discoideum (Social amoeba)).